A 200-amino-acid chain; its full sequence is Holliday junction branch migration complex subunit RuvA (200 aa).

Positions 1 to 65 (MYEYIKGTLT…ETEHVLYGFS (65 aa)) are domain I. Residues 66–144 (SRAERECFRL…TLMPLYLEEP (79 aa)) form a domain II region. The segment at 145–149 (VVPSS) is flexible linker. Residues 150 to 200 (TANSSFKEGIGALMNLGFSRLAADRMMTEAVKELSEEASVAELLPIALRKS) form a domain III region.

It belongs to the RuvA family. In terms of assembly, homotetramer. Forms an RuvA(8)-RuvB(12)-Holliday junction (HJ) complex. HJ DNA is sandwiched between 2 RuvA tetramers; dsDNA enters through RuvA and exits via RuvB. An RuvB hexamer assembles on each DNA strand where it exits the tetramer. Each RuvB hexamer is contacted by two RuvA subunits (via domain III) on 2 adjacent RuvB subunits; this complex drives branch migration. In the full resolvosome a probable DNA-RuvA(4)-RuvB(12)-RuvC(2) complex forms which resolves the HJ.

It localises to the cytoplasm. Functionally, the RuvA-RuvB-RuvC complex processes Holliday junction (HJ) DNA during genetic recombination and DNA repair, while the RuvA-RuvB complex plays an important role in the rescue of blocked DNA replication forks via replication fork reversal (RFR). RuvA specifically binds to HJ cruciform DNA, conferring on it an open structure. The RuvB hexamer acts as an ATP-dependent pump, pulling dsDNA into and through the RuvAB complex. HJ branch migration allows RuvC to scan DNA until it finds its consensus sequence, where it cleaves and resolves the cruciform DNA. This Chlamydia trachomatis serovar L2 (strain ATCC VR-902B / DSM 19102 / 434/Bu) protein is Holliday junction branch migration complex subunit RuvA.